The primary structure comprises 440 residues: Thymidine phosphorylase (440 aa).

Belongs to the thymidine/pyrimidine-nucleoside phosphorylase family. Homodimer.

The enzyme catalyses thymidine + phosphate = 2-deoxy-alpha-D-ribose 1-phosphate + thymine. It functions in the pathway pyrimidine metabolism; dTMP biosynthesis via salvage pathway; dTMP from thymine: step 1/2. Functionally, the enzymes which catalyze the reversible phosphorolysis of pyrimidine nucleosides are involved in the degradation of these compounds and in their utilization as carbon and energy sources, or in the rescue of pyrimidine bases for nucleotide synthesis. This chain is Thymidine phosphorylase, found in Salmonella agona (strain SL483).